We begin with the raw amino-acid sequence, 182 residues long: Unknown protein 1 (182 aa).

This chain is Unknown protein 1, found in Helianthus annuus (Common sunflower).